The primary structure comprises 266 residues: Mitochondrial S-adenosylmethionine carrier protein (266 aa).

Solcar repeat units follow at residues 4-77, 85-167, and 176-264; these read RELC…AKRF, LSPI…LKNL, and VDCW…VRSS. The next 6 helical transmembrane spans lie at 5–25, 49–69, 84–104, 141–161, 181–201, and 237–257; these read ELCA…LILF, IYAG…AFFV, YLSP…ACLI, RGYK…FPLW, SAVC…PLDV, and FAGV…FLGA.

The protein belongs to the mitochondrial carrier (TC 2.A.29) family.

It is found in the mitochondrion inner membrane. The enzyme catalyses S-adenosyl-L-homocysteine(out) + S-adenosyl-L-methionine(in) = S-adenosyl-L-homocysteine(in) + S-adenosyl-L-methionine(out). In terms of biological role, mitochondrial S-adenosyl-L-methionine/S-adenosyl-L-homocysteine antiporter. Mediates the exchange of cytosolic S-adenosyl-L-methionine, the predominant methyl-group donor for macromolecule methylation processes, for mitochondrial S-adenosylhomocysteine(SAH), a by-product of methylation reactions. The sequence is that of Mitochondrial S-adenosylmethionine carrier protein (slc25a26) from Xenopus laevis (African clawed frog).